A 169-amino-acid chain; its full sequence is Small ribosomal subunit protein uS5 (169 aa).

In terms of domain architecture, S5 DRBM spans 14–77 (LDDQVVAINR…AAAEKNLITV (64 aa)).

The protein belongs to the universal ribosomal protein uS5 family. Part of the 30S ribosomal subunit. Contacts proteins S4 and S8.

Functionally, with S4 and S12 plays an important role in translational accuracy. In terms of biological role, located at the back of the 30S subunit body where it stabilizes the conformation of the head with respect to the body. In Limosilactobacillus reuteri (strain DSM 20016) (Lactobacillus reuteri), this protein is Small ribosomal subunit protein uS5.